A 723-amino-acid polypeptide reads, in one-letter code: Polyribonucleotide nucleotidyltransferase (723 aa).

Positions 487 and 493 each coordinate Mg(2+). The KH domain maps to 554–613; the sequence is PKILIMHINPDKIREVIGPSGKQINKIIDETGVKIDIEQDGTIFISSVDEAANQKAKQII. In terms of domain architecture, S1 motif spans 623 to 691; sequence GQVYLGKVKR…KQGRVNLSRK (69 aa). The tract at residues 702–723 is disordered; that stretch reads GELPRESREKRGRRPERHRMKP. Residues 711-723 show a composition bias toward basic residues; sequence KRGRRPERHRMKP.

Belongs to the polyribonucleotide nucleotidyltransferase family. The cofactor is Mg(2+).

Its subcellular location is the cytoplasm. It carries out the reaction RNA(n+1) + phosphate = RNA(n) + a ribonucleoside 5'-diphosphate. Involved in mRNA degradation. Catalyzes the phosphorolysis of single-stranded polyribonucleotides processively in the 3'- to 5'-direction. This Geobacillus kaustophilus (strain HTA426) protein is Polyribonucleotide nucleotidyltransferase.